A 122-amino-acid chain; its full sequence is Large ribosomal subunit protein uL14 (122 aa).

Belongs to the universal ribosomal protein uL14 family. Part of the 50S ribosomal subunit. Forms a cluster with proteins L3 and L19. In the 70S ribosome, L14 and L19 interact and together make contacts with the 16S rRNA in bridges B5 and B8.

In terms of biological role, binds to 23S rRNA. Forms part of two intersubunit bridges in the 70S ribosome. The sequence is that of Large ribosomal subunit protein uL14 from Campylobacter fetus subsp. fetus (strain 82-40).